A 930-amino-acid chain; its full sequence is Beta-mannosidase A (930 aa).

An N-terminal signal peptide occupies residues 1-21 (MHVKAETVLALLTPGLPSVVG). N-linked (GlcNAc...) asparagine glycosylation is found at N62, N246, N281, N315, and N346. E478 serves as the catalytic Proton donor. N-linked (GlcNAc...) asparagine glycans are attached at residues N536, N607, N630, N657, N737, N760, N782, N789, N797, N823, and N909.

The protein belongs to the glycosyl hydrolase 2 family. Beta-mannosidase A subfamily. In terms of assembly, homodimer.

It is found in the secreted. It carries out the reaction Hydrolysis of terminal, non-reducing beta-D-mannose residues in beta-D-mannosides.. It participates in glycan metabolism; N-glycan degradation. Its function is as follows. Exoglycosidase that cleaves the single beta-linked mannose residue from the non-reducing end of beta-mannosidic oligosaccharides of various complexity and length. Involved in the degradation of polymeric mannan and galactomannan. The chain is Beta-mannosidase A (mndA) from Neosartorya fischeri (strain ATCC 1020 / DSM 3700 / CBS 544.65 / FGSC A1164 / JCM 1740 / NRRL 181 / WB 181) (Aspergillus fischerianus).